Consider the following 120-residue polypeptide: MQLYLKDGMEIREVQFTNEEVQNYCELLNIKYDHYVPTLMCAKLWPQFELFQSFSKKPIILKETHIKTQHQLQVDCTYEATLHKVSQKLIKNIIKYTYGLEINKDKKHCMYIKQIFIEVR.

The chain is Protein VraC from Staphylococcus epidermidis (strain ATCC 12228 / FDA PCI 1200).